Consider the following 109-residue polypeptide: MRGLLTVPAPAQAAAGAGAFDPDRGWRLHAQVAVRPEPFGALLYHFGTRKLSFLKNRTILAVVRSLADHPDVRSACRAAGVDDSEHAPYLHALSVLAGSHMLVPQEADQ.

This sequence belongs to the peptide chaperone MftB family. In terms of assembly, interacts with MftA and MftC.

Functionally, peptide chaperone involved in the biosynthesis of the enzyme cofactor mycofactocin (MFT). Binds MftA and MftC with high affinity, and is essential for MftC activity on MftA, likely via the formation of a ternary complex. The chain is Peptide chaperone MftB from Mycobacterium ulcerans (strain Agy99).